The primary structure comprises 113 residues: Large ribosomal subunit protein uL22 (113 aa).

Belongs to the universal ribosomal protein uL22 family. Part of the 50S ribosomal subunit.

This protein binds specifically to 23S rRNA; its binding is stimulated by other ribosomal proteins, e.g. L4, L17, and L20. It is important during the early stages of 50S assembly. It makes multiple contacts with different domains of the 23S rRNA in the assembled 50S subunit and ribosome. Functionally, the globular domain of the protein is located near the polypeptide exit tunnel on the outside of the subunit, while an extended beta-hairpin is found that lines the wall of the exit tunnel in the center of the 70S ribosome. In Geobacillus kaustophilus (strain HTA426), this protein is Large ribosomal subunit protein uL22.